We begin with the raw amino-acid sequence, 1098 residues long: PAN2-PAN3 deadenylation complex catalytic subunit PAN2 (1098 aa).

WD repeat units follow at residues 19–58 (ASKD…PFQL), 150–190 (TGFD…SVKS), 253–293 (PFPN…KLNV), and 300–338 (PASP…NFVN). Residues 340–466 (PAPLEEQDIP…SIFHLKSPTS (127 aa)) are linker. The segment at 417-442 (RNISQPYQSLREPPGSNSNAPRFISE) is disordered. The region spanning 466 to 839 (SVPHCYSRLQ…KPVIIVYSEP (374 aa)) is the USP domain. The region spanning 894–1067 (IAIDAEFVVS…EDAYTALMLF (174 aa)) is the Exonuclease domain. A divalent metal cation is bound by residues Asp-897, Glu-899, Asp-1006, and Asp-1059.

Belongs to the peptidase C19 family. PAN2 subfamily. Forms a heterotrimer with an asymmetric homodimer of the regulatory subunit PAN3 to form the poly(A)-nuclease (PAN) deadenylation complex. Requires a divalent metal cation as cofactor.

The protein resides in the cytoplasm. The catalysed reaction is Exonucleolytic cleavage of poly(A) to 5'-AMP.. Its activity is regulated as follows. Positively regulated by the regulatory subunit PAN3. Catalytic subunit of the poly(A)-nuclease (PAN) deadenylation complex, one of two cytoplasmic mRNA deadenylases involved in mRNA turnover. PAN specifically shortens poly(A) tails of RNA and the activity is stimulated by poly(A)-binding protein PAB1. PAN deadenylation is followed by rapid degradation of the shortened mRNA tails by the CCR4-NOT complex. Deadenylated mRNAs are then degraded by two alternative mechanisms, namely exosome-mediated 3'-5' exonucleolytic degradation, or deadenylation-dependent mRNA decaping and subsequent 5'-3' exonucleolytic degradation by XRN1. May also be involved in post-transcriptional maturation of mRNA poly(A) tails. In Meyerozyma guilliermondii (strain ATCC 6260 / CBS 566 / DSM 6381 / JCM 1539 / NBRC 10279 / NRRL Y-324) (Yeast), this protein is PAN2-PAN3 deadenylation complex catalytic subunit PAN2.